A 552-amino-acid chain; its full sequence is Esterase E4 (552 aa).

Residues 1–23 (MKNTCGILLNLFLFIGCFLTCSA) form the signal peptide. Asparagine 81 carries an N-linked (GlcNAc...) asparagine glycan. Cysteine 89 and cysteine 106 are oxidised to a cystine. Serine 214 (acyl-ester intermediate) is an active-site residue. Cysteine 266 and cysteine 277 are disulfide-bonded. N-linked (GlcNAc...) asparagine glycosylation occurs at asparagine 269. The active-site Charge relay system is the glutamate 339. 3 N-linked (GlcNAc...) asparagine glycosylation sites follow: asparagine 371, asparagine 404, and asparagine 443. The Charge relay system role is filled by histidine 463.

The protein belongs to the type-B carboxylesterase/lipase family.

It catalyses the reaction a carboxylic ester + H2O = an alcohol + a carboxylate + H(+). Overproduction of nonspecific esterases is a common mechanism of resistance to organophosphate insecticides. This Myzus persicae (Green peach aphid) protein is Esterase E4.